An 871-amino-acid polypeptide reads, in one-letter code: Pentatricopeptide repeat-containing protein DOT4, chloroplastic (871 aa).

Residues 1 to 28 (MAMLVTNLSSSSFCFFSSPHLQNQKEIR) constitute a chloroplast transit peptide. PPR repeat units follow at residues 60–94 (SVTDANTQLRRFCESGNLENAVKLLCVSGKWDIDP), 96–127 (TLCSVLQLCADSKSLKDGKEVDNFIRGNGFVI), 128–158 (DSNLGSKLSLMYTNCGDLKEASRVFDEVKIE), 159–193 (KALFWNILMNELAKSGDFSGSIGLFKKMMSSGVEM), 194–228 (DSYTFSCVSKSFSSLRSVHGGEQLHGFILKSGFGE), 229–259 (RNSVGNSLVAFYLKNQRVDSARKVFDEMTER), 260–294 (DVISWNSIINGYVSNGLAEKGLSVFVQMLVSGIEI), 295–329 (DLATIVSVFAGCADSRLISLGRAVHSIGVKACFSR), 330–360 (EDRFCNTLLDMYSKCGDLDSAKAVFREMSDR), 361–395 (SVVSYTSMIAGYAREGLAGEAVKLFEEMEEEGISP), 396–430 (DVYTVTAVLNCCARYRLLDEGKRVHEWIKENDLGF), 431–465 (DIFVSNALMDMYAKCGSMQEAELVFSEMRVKDIIS), 466–497 (WNTIIGGYSKNCYANEALSLFNLLLEEKRFSP), 498–532 (DERTVACVLPACASLSAFDKGREIHGYIMRNGYFS), 533–563 (DRHVANSLVDMYAKCGALLLAHMLFDDIASK), 564–598 (DLVSWTVMIAGYGMHGFGKEAIALFNQMRQAGIEA), 599–629 (DEISFVSLLYACSHSGLVDEGWRFFNIMRHE), and 635–665 (TVEHYACIVDMLARTGDLIKAYRFIENMPIP). The tract at residues 670–745 (IWGALLCGCR…NPGCSWIEIK (76 aa)) is type E motif. The segment at 746 to 776 (GRVNIFVAGDSSNPETENIEAFLRKVRARMI) is type E(+) motif. Residues 777-871 (EEGYSPLTKY…DGHCSCRGFW (95 aa)) are type DYW motif.

It belongs to the PPR family. PCMP-H subfamily. Zn(2+) serves as cofactor. Weakly expressed in leaves.

The protein localises to the plastid. Its subcellular location is the chloroplast. Functionally, plays a major role in single RNA editing events in chloroplasts. Acts as a site-recognition transacting factor involved in the edition of the unique site (corresponding to cytidine-488) of rpoC1, which is a plastid-encoded subunit of the chloroplast DNA-directed RNA polymerase. May provide the catalytic activity for editing site conversion. Involved in leaf vasculature patterning. The polypeptide is Pentatricopeptide repeat-containing protein DOT4, chloroplastic (Arabidopsis thaliana (Mouse-ear cress)).